A 416-amino-acid chain; its full sequence is STAM-binding protein-like (416 aa).

The disordered stretch occupies residues 214–244; it reads SYGTVQPHPPAVDRSLKPSSYGSNSSGVTSD. The span at 230 to 243 shows a compositional bias: low complexity; it reads KPSSYGSNSSGVTS. One can recognise an MPN domain in the interval 249–380; it reads VKIPRDVCCK…LTDYGMKEIG (132 aa). Histidine 327, histidine 329, aspartate 340, histidine 342, cysteine 382, histidine 388, and histidine 390 together coordinate Zn(2+). The short motif at 327-340 is the JAMM motif element; the sequence is HTHPTQTAFLSSVD.

The protein belongs to the peptidase M67C family. Requires Zn(2+) as cofactor.

Its function is as follows. Zinc metalloprotease that specifically cleaves 'Lys-63'-linked polyubiquitin chains. Does not cleave 'Lys-48'-linked polyubiquitin chains. Functions at the endosome and is able to oppose the ubiquitin-dependent sorting of receptors to lysosomes. The chain is STAM-binding protein-like (stambp) from Xenopus laevis (African clawed frog).